The following is a 344-amino-acid chain: Tripartite motif-containing protein 44 (344 aa).

2 disordered regions span residues 1–25 (MASG…EPDE) and 66–165 (AWTP…EFDP). Positions 75–92 (GAGKEEAEVKVEQEREIE) are enriched in basic and acidic residues. Acidic residues predominate over residues 93 to 165 (SEAGEESESE…ETEAESEFDP (73 aa)). The B box-type zinc-finger motif lies at 174 to 215 (VAKRKCPDHGLDLSTYCQEDRQLICVLCPVIGAHQGHQLSTL). Zn(2+)-binding residues include C179, H182, C201, and H207. Residues 290-325 (AHVTEILADIQSHMDRLMTQMAQAKEQLDTSNESAE) adopt a coiled-coil conformation. The disordered stretch occupies residues 309–344 (QMAQAKEQLDTSNESAEPKAEGDEEGPSGASEEEDT). The segment covering 330–344 (GDEEGPSGASEEEDT) has biased composition (acidic residues). Phosphoserine is present on residues S336 and S339.

Interacts (via coiled coil) with TRIM17 (via coiled coil). In terms of tissue distribution, highly expressed in testis.

In terms of biological role, may play a role in the process of differentiation and maturation of neuronal cells. May regulate the activity of TRIM17. Is a negative regulator of PAX6 expression. This chain is Tripartite motif-containing protein 44 (TRIM44), found in Homo sapiens (Human).